Here is a 273-residue protein sequence, read N- to C-terminus: Large ribosomal subunit protein uL2 (273 aa).

The tract at residues 221–263 is disordered; the sequence is RGTAMNPVDHPHGGGEGRNFGKHPVTPWGVQTKGKKTRHNKRT. Residues 253-263 are compositionally biased toward basic residues; the sequence is KGKKTRHNKRT.

It belongs to the universal ribosomal protein uL2 family. As to quaternary structure, part of the 50S ribosomal subunit. Forms a bridge to the 30S subunit in the 70S ribosome.

Functionally, one of the primary rRNA binding proteins. Required for association of the 30S and 50S subunits to form the 70S ribosome, for tRNA binding and peptide bond formation. It has been suggested to have peptidyltransferase activity; this is somewhat controversial. Makes several contacts with the 16S rRNA in the 70S ribosome. This Histophilus somni (strain 129Pt) (Haemophilus somnus) protein is Large ribosomal subunit protein uL2.